Consider the following 197-residue polypeptide: Nucleoid occlusion factor SlmA (197 aa).

The HTH tetR-type domain maps to 7–67; that stretch reads INRREHILQC…GLIEFIEESL (61 aa). The segment at residues 30–49 is a DNA-binding region (H-T-H motif); that stretch reads TTAKLASEVGVSEAALYRHF. Residues 109–136 adopt a coiled-coil conformation; the sequence is DALLGENERLRSRISNLFAKIETQLKQI.

This sequence belongs to the nucleoid occlusion factor SlmA family. As to quaternary structure, homodimer. Interacts with FtsZ.

Its subcellular location is the cytoplasm. The protein resides in the nucleoid. Required for nucleoid occlusion (NO) phenomenon, which prevents Z-ring formation and cell division over the nucleoid. Acts as a DNA-associated cell division inhibitor that binds simultaneously chromosomal DNA and FtsZ, and disrupts the assembly of FtsZ polymers. SlmA-DNA-binding sequences (SBS) are dispersed on non-Ter regions of the chromosome, preventing FtsZ polymerization at these regions. The sequence is that of Nucleoid occlusion factor SlmA from Shewanella baltica (strain OS223).